The primary structure comprises 333 residues: Anthranilate phosphoribosyltransferase (333 aa).

5-phospho-alpha-D-ribose 1-diphosphate contacts are provided by residues Gly-78, 81-82 (GD), Thr-86, 88-91 (NVST), 106-114 (KHGNYSVSS), and Ser-118. Gly-78 lines the anthranilate pocket. Ser-90 provides a ligand contact to Mg(2+). Asn-109 contributes to the anthranilate binding site. Arg-164 contacts anthranilate. Mg(2+) contacts are provided by Asp-222 and Glu-223.

This sequence belongs to the anthranilate phosphoribosyltransferase family. In terms of assembly, homodimer. The cofactor is Mg(2+).

The enzyme catalyses N-(5-phospho-beta-D-ribosyl)anthranilate + diphosphate = 5-phospho-alpha-D-ribose 1-diphosphate + anthranilate. Its pathway is amino-acid biosynthesis; L-tryptophan biosynthesis; L-tryptophan from chorismate: step 2/5. Its function is as follows. Catalyzes the transfer of the phosphoribosyl group of 5-phosphorylribose-1-pyrophosphate (PRPP) to anthranilate to yield N-(5'-phosphoribosyl)-anthranilate (PRA). This chain is Anthranilate phosphoribosyltransferase, found in Natronomonas pharaonis (strain ATCC 35678 / DSM 2160 / CIP 103997 / JCM 8858 / NBRC 14720 / NCIMB 2260 / Gabara) (Halobacterium pharaonis).